Reading from the N-terminus, the 487-residue chain is Solute carrier family 22 member 15-like (487 aa).

A helical membrane pass occupies residues 22–42 (AFLTLLQVYVACQSMLIVLVG). An N-linked (GlcNAc...) asparagine glycan is attached at asparagine 70. 11 consecutive transmembrane segments (helical) span residues 90 to 110 (LASS…GPLS), 117 to 137 (PVYL…ALAP), 141 to 161 (VFAV…LVSF), 178 to 198 (SLTN…GFYI), 203 to 223 (TLAF…FLLP), 286 to 306 (ILLM…TLNA), 315 to 335 (LNVA…LYFI), 345 to 365 (ATAG…FLPE), 374 to 394 (TVLA…VYIY), 406 to 426 (AGLG…PFIP), and 435 to 455 (MPFV…LLLP).

Belongs to the major facilitator (TC 2.A.1) superfamily. Organic cation transporter (TC 2.A.1.19) family.

Its subcellular location is the membrane. Its function is as follows. Probably transports organic cations. This chain is Solute carrier family 22 member 15-like (slc22a15b), found in Xenopus tropicalis (Western clawed frog).